The following is a 132-amino-acid chain: Small ribosomal subunit protein eS12 (132 aa).

Alanine 2 bears the N-acetylalanine mark. Position 129 is an N6-succinyllysine (lysine 129).

Belongs to the eukaryotic ribosomal protein eS12 family. In terms of assembly, part of the small subunit (SSU) processome, composed of more than 70 proteins and the RNA chaperone small nucleolar RNA (snoRNA) U3. Subunit of the 40S ribosomal complex.

The protein resides in the nucleus. The protein localises to the nucleolus. Its function is as follows. Part of the small subunit (SSU) processome, first precursor of the small eukaryotic ribosomal subunit. During the assembly of the SSU processome in the nucleolus, many ribosome biogenesis factors, an RNA chaperone and ribosomal proteins associate with the nascent pre-rRNA and work in concert to generate RNA folding, modifications, rearrangements and cleavage as well as targeted degradation of pre-ribosomal RNA by the RNA exosome. Subunit of the 40S ribosomal complex. The chain is Small ribosomal subunit protein eS12 (Rps12) from Mus musculus (Mouse).